We begin with the raw amino-acid sequence, 218 residues long: Small ribosomal subunit protein uS3c (218 aa).

In terms of domain architecture, KH type-2 spans 43–118 (IKNYVQKNMK…KLNISITRIE (76 aa)).

This sequence belongs to the universal ribosomal protein uS3 family. Part of the 30S ribosomal subunit.

The protein resides in the plastid. The protein localises to the chloroplast. This is Small ribosomal subunit protein uS3c (rps3) from Populus trichocarpa (Western balsam poplar).